The primary structure comprises 552 residues: 4-coumarate--CoA ligase-like 3 (552 aa).

ATP is bound by residues serine 207, serine 208, glycine 209, threonine 210, threonine 211, and lysine 215. Position 252 (phenylalanine 252) interacts with (E)-4-coumaroyl-AMP. Arginine 273 is a binding site for CoA. An SBD1 region spans residues 275–346 (GLDDMMQAVE…EKYPTVNIFQ (72 aa)). (E)-4-coumaroyl-AMP is bound by residues glycine 324, glutamine 346, glycine 347, and threonine 351. The ATP site is built by glutamine 346, glycine 347, threonine 351, aspartate 432, and arginine 447. The interval 347-411 (GYALTESHGS…LKGPSISKGY (65 aa)) is SBD2. (E)-4-coumaroyl-AMP contacts are provided by lysine 449 and lysine 453. Residues lysine 455 and glycine 456 each coordinate CoA. Lysine 538 serves as a coordination point for ATP. The Microbody targeting signal signature appears at 550–552 (SKL).

Belongs to the ATP-dependent AMP-binding enzyme family. Mg(2+) is required as a cofactor.

It localises to the peroxisome. It catalyses the reaction (E)-4-coumarate + ATP + CoA = (E)-4-coumaroyl-CoA + AMP + diphosphate. The enzyme catalyses (E)-4-coumarate + ATP + H(+) = (E)-4-coumaroyl-AMP + diphosphate. The catalysed reaction is (E)-4-coumaroyl-AMP + CoA = (E)-4-coumaroyl-CoA + AMP + H(+). Carboxylate--CoA ligase that may use 4-coumarate as substrate. Follows a two-step reaction mechanism, wherein the carboxylate substrate first undergoes adenylation by ATP, followed by a thioesterification in the presence of CoA to yield the final CoA thioester. This Arabidopsis thaliana (Mouse-ear cress) protein is 4-coumarate--CoA ligase-like 3.